The following is a 231-amino-acid chain: Lipoprotein-releasing system ATP-binding protein LolD (231 aa).

An ABC transporter domain is found at 11–231 (LQAEHLGKVY…HMENGRLQPD (221 aa)). 47 to 54 (GASGSGKS) provides a ligand contact to ATP.

Belongs to the ABC transporter superfamily. Lipoprotein translocase (TC 3.A.1.125) family. In terms of assembly, the complex is composed of two ATP-binding proteins (LolD) and two transmembrane proteins (LolC and LolE).

The protein localises to the cell inner membrane. In terms of biological role, part of the ABC transporter complex LolCDE involved in the translocation of mature outer membrane-directed lipoproteins, from the inner membrane to the periplasmic chaperone, LolA. Responsible for the formation of the LolA-lipoprotein complex in an ATP-dependent manner. This is Lipoprotein-releasing system ATP-binding protein LolD from Bordetella bronchiseptica (strain ATCC BAA-588 / NCTC 13252 / RB50) (Alcaligenes bronchisepticus).